The chain runs to 199 residues: Probable GTP-binding protein EngB (199 aa).

The EngB-type G domain occupies 28–199 (DLPEIALAGR…DSWDAILEQV (172 aa)). Residues 36–43 (GRSNVGKS), 63–67 (GKTQL), 81–84 (DVPG), 148–151 (TKAD), and 180–182 (FSS) contribute to the GTP site. Ser43 and Thr65 together coordinate Mg(2+).

This sequence belongs to the TRAFAC class TrmE-Era-EngA-EngB-Septin-like GTPase superfamily. EngB GTPase family. Mg(2+) serves as cofactor.

Functionally, necessary for normal cell division and for the maintenance of normal septation. In Streptococcus pyogenes serotype M28 (strain MGAS6180), this protein is Probable GTP-binding protein EngB.